Here is a 474-residue protein sequence, read N- to C-terminus: Na(+)/H(+) antiporter NhaA 3 (474 aa).

11 helical membrane-spanning segments follow: residues 31–51, 73–93, 110–130, 141–161, 171–191, 194–214, 220–240, 280–300, 309–329, 347–367, and 378–398; these read VGGV…NIPA, LSVA…VAGI, AALP…VYTV, GWAV…AVIG, FLLT…AVFF, TLNF…WLLL, GWYV…NSGV, LAVP…GALA, LGVV…GTWL, VFAV…IGEL, and EVKA…TVLL.

The protein belongs to the NhaA Na(+)/H(+) (TC 2.A.33) antiporter family.

The protein localises to the cell membrane. It catalyses the reaction Na(+)(in) + 2 H(+)(out) = Na(+)(out) + 2 H(+)(in). In terms of biological role, na(+)/H(+) antiporter that extrudes sodium in exchange for external protons. The chain is Na(+)/H(+) antiporter NhaA 3 from Streptomyces coelicolor (strain ATCC BAA-471 / A3(2) / M145).